A 241-amino-acid polypeptide reads, in one-letter code: Thiamine import ATP-binding protein ThiQ (241 aa).

One can recognise an ABC transporter domain in the interval 7 to 235; it reads IRLSDVRFSY…AGPEALRHYI (229 aa). Residue 37-44 coordinates ATP; it reads GPSGSGKS.

It belongs to the ABC transporter superfamily. Thiamine importer (TC 3.A.1.19.1) family. As to quaternary structure, the complex is composed of two ATP-binding proteins (ThiQ), two transmembrane proteins (ThiP) and a solute-binding protein (ThiB).

Its subcellular location is the cell inner membrane. The catalysed reaction is thiamine(out) + ATP + H2O = thiamine(in) + ADP + phosphate + H(+). Part of the ABC transporter complex ThiBPQ involved in thiamine import. Responsible for energy coupling to the transport system. This is Thiamine import ATP-binding protein ThiQ from Brucella abortus biovar 1 (strain 9-941).